A 153-amino-acid chain; its full sequence is Nucleoside diphosphate kinase (153 aa).

ATP contacts are provided by Lys-11, Phe-59, Arg-87, Thr-93, Arg-104, and Asn-114. The active-site Pros-phosphohistidine intermediate is the His-117.

This sequence belongs to the NDK family. The cofactor is Mg(2+).

It catalyses the reaction a 2'-deoxyribonucleoside 5'-diphosphate + ATP = a 2'-deoxyribonucleoside 5'-triphosphate + ADP. It carries out the reaction a ribonucleoside 5'-diphosphate + ATP = a ribonucleoside 5'-triphosphate + ADP. Its function is as follows. Major role in the synthesis of nucleoside triphosphates other than ATP. The ATP gamma phosphate is transferred to the NDP beta phosphate via a ping-pong mechanism, using a phosphorylated active-site intermediate. The chain is Nucleoside diphosphate kinase (swoH) from Emericella nidulans (strain FGSC A4 / ATCC 38163 / CBS 112.46 / NRRL 194 / M139) (Aspergillus nidulans).